Consider the following 1053-residue polypeptide: Phosphoenolpyruvate carboxylase (1053 aa).

His-246 is an active-site residue. Over residues 461 to 473 (RNTRLQQQQEKDP) the composition is skewed to basic and acidic residues. The disordered stretch occupies residues 461-480 (RNTRLQQQQEKDPTTPLPEY). Lys-699 is an active-site residue.

This sequence belongs to the PEPCase type 1 family. The cofactor is Mg(2+).

It catalyses the reaction oxaloacetate + phosphate = phosphoenolpyruvate + hydrogencarbonate. In terms of biological role, forms oxaloacetate, a four-carbon dicarboxylic acid source for the tricarboxylic acid cycle. This chain is Phosphoenolpyruvate carboxylase (ppc), found in Synechococcus sp. (strain ATCC 27144 / PCC 6301 / SAUG 1402/1) (Anacystis nidulans).